The primary structure comprises 220 residues: Deoxyribose-phosphate aldolase (220 aa).

Asp-89 serves as the catalytic Proton donor/acceptor. Residue Lys-151 is the Schiff-base intermediate with acetaldehyde of the active site. The active-site Proton donor/acceptor is Lys-180.

Belongs to the DeoC/FbaB aldolase family. DeoC type 1 subfamily.

Its subcellular location is the cytoplasm. It catalyses the reaction 2-deoxy-D-ribose 5-phosphate = D-glyceraldehyde 3-phosphate + acetaldehyde. It participates in carbohydrate degradation; 2-deoxy-D-ribose 1-phosphate degradation; D-glyceraldehyde 3-phosphate and acetaldehyde from 2-deoxy-alpha-D-ribose 1-phosphate: step 2/2. Catalyzes a reversible aldol reaction between acetaldehyde and D-glyceraldehyde 3-phosphate to generate 2-deoxy-D-ribose 5-phosphate. The protein is Deoxyribose-phosphate aldolase of Deinococcus radiodurans (strain ATCC 13939 / DSM 20539 / JCM 16871 / CCUG 27074 / LMG 4051 / NBRC 15346 / NCIMB 9279 / VKM B-1422 / R1).